The chain runs to 76 residues: Exodeoxyribonuclease 7 small subunit (76 aa).

This sequence belongs to the XseB family. Heterooligomer composed of large and small subunits.

It is found in the cytoplasm. The enzyme catalyses Exonucleolytic cleavage in either 5'- to 3'- or 3'- to 5'-direction to yield nucleoside 5'-phosphates.. Functionally, bidirectionally degrades single-stranded DNA into large acid-insoluble oligonucleotides, which are then degraded further into small acid-soluble oligonucleotides. The polypeptide is Exodeoxyribonuclease 7 small subunit (Bacillus cereus (strain G9842)).